The following is a 212-amino-acid chain: MGVTCVSQMPVAEGKSVQQTVELLTKKLEMLGAEKQGTFCVDCETYHTAASTLGSQGQAGKLMYVMHNSEYPLSCFALFENGPCLIADTNFDVLMVKLKGFFQSAKASKIETRGTRYQYCDFLVKVGTVTMGPSARGISVEVEYGPCVVASDCWSLLLEFLQSFLGSHTPGAPTVFGNRHDAVYGPADTMVQYMELFNKVRKQQQVPVAGIR.

The protein belongs to the Mediator complex subunit 20 family. As to quaternary structure, component of the Mediator complex, which is composed of MED1, MED4, MED6, MED7, MED8, MED9, MED10, MED11, MED12, MED13, MED13L, MED14, MED15, MED16, MED17, MED18, MED19, MED20, MED21, MED22, MED23, MED24, MED25, MED26, MED27, MED29, MED30, MED31, CCNC, CDK8 and CDC2L6/CDK11. The MED12, MED13, CCNC and CDK8 subunits form a distinct module termed the CDK8 module. Mediator containing the CDK8 module is less active than Mediator lacking this module in supporting transcriptional activation. Individual preparations of the Mediator complex lacking one or more distinct subunits have been variously termed ARC, CRSP, DRIP, PC2, SMCC and TRAP. Interacts with PPARG.

Its subcellular location is the nucleus. Functionally, component of the Mediator complex, a coactivator involved in the regulated transcription of nearly all RNA polymerase II-dependent genes. Mediator functions as a bridge to convey information from gene-specific regulatory proteins to the basal RNA polymerase II transcription machinery. Mediator is recruited to promoters by direct interactions with regulatory proteins and serves as a scaffold for the assembly of a functional preinitiation complex with RNA polymerase II and the general transcription factors. This chain is Mediator of RNA polymerase II transcription subunit 20 (Med20), found in Rattus norvegicus (Rat).